A 237-amino-acid chain; its full sequence is Ribonuclease PH (237 aa).

Phosphate contacts are provided by residues R86 and 124-126 (GTR).

It belongs to the RNase PH family. In terms of assembly, homohexameric ring arranged as a trimer of dimers.

It carries out the reaction tRNA(n+1) + phosphate = tRNA(n) + a ribonucleoside 5'-diphosphate. Its function is as follows. Phosphorolytic 3'-5' exoribonuclease that plays an important role in tRNA 3'-end maturation. Removes nucleotide residues following the 3'-CCA terminus of tRNAs; can also add nucleotides to the ends of RNA molecules by using nucleoside diphosphates as substrates, but this may not be physiologically important. Probably plays a role in initiation of 16S rRNA degradation (leading to ribosome degradation) during starvation. This chain is Ribonuclease PH, found in Shewanella pealeana (strain ATCC 700345 / ANG-SQ1).